Consider the following 177-residue polypeptide: ATP synthase subunit delta (177 aa).

It belongs to the ATPase delta chain family. F-type ATPases have 2 components, F(1) - the catalytic core - and F(0) - the membrane proton channel. F(1) has five subunits: alpha(3), beta(3), gamma(1), delta(1), epsilon(1). F(0) has three main subunits: a(1), b(2) and c(10-14). The alpha and beta chains form an alternating ring which encloses part of the gamma chain. F(1) is attached to F(0) by a central stalk formed by the gamma and epsilon chains, while a peripheral stalk is formed by the delta and b chains.

It localises to the cell membrane. Functionally, f(1)F(0) ATP synthase produces ATP from ADP in the presence of a proton or sodium gradient. F-type ATPases consist of two structural domains, F(1) containing the extramembraneous catalytic core and F(0) containing the membrane proton channel, linked together by a central stalk and a peripheral stalk. During catalysis, ATP synthesis in the catalytic domain of F(1) is coupled via a rotary mechanism of the central stalk subunits to proton translocation. Its function is as follows. This protein is part of the stalk that links CF(0) to CF(1). It either transmits conformational changes from CF(0) to CF(1) or is implicated in proton conduction. The sequence is that of ATP synthase subunit delta from Caldanaerobacter subterraneus subsp. tengcongensis (strain DSM 15242 / JCM 11007 / NBRC 100824 / MB4) (Thermoanaerobacter tengcongensis).